The following is a 128-amino-acid chain: CD59 glycoprotein (128 aa).

The signal sequence occupies residues 1 to 25 (MGIQGGSVLFGLLLVLAVFCHSGHS). One can recognise a UPAR/Ly6 domain in the interval 26 to 108 (LQCYNCPNPT…QLENGGTSLS (83 aa)). Cystine bridges form between Cys28/Cys51, Cys31/Cys38, and Cys44/Cys64. Asn43 carries an N-linked (GlcNAc...) asparagine glycan. Residue Lys66 is glycosylated (N-linked (Glc) (glycation) lysine). Disulfide bonds link Cys70/Cys88 and Cys89/Cys94. O-linked (GalNAc...) threonine glycans are attached at residues Thr76 and Thr77. Residue Asn102 is the site of GPI-anchor amidated asparagine attachment. Residues 103–128 (GGTSLSEKTVLLLVTPFLAAAWSLHP) constitute a propeptide, removed in mature form.

In terms of assembly, interacts with T-cell surface antigen CD2. N- and O-glycosylated. The N-glycosylation mainly consists of a family of biantennary complex-type structures with and without lactosamine extensions and outer arm fucose residues. Also significant amounts of triantennary complexes (22%). Variable sialylation also present in the Asn-43 oligosaccharide. The predominant O-glycans are mono-sialylated forms of the disaccharide, Gal-beta-1,3GalNAc, and their sites of attachment are probably on Thr-76 and Thr-77. The GPI-anchor of soluble urinary CD59 has no inositol-associated phospholipid, but is composed of seven different GPI-anchor variants of one or more monosaccharide units. Major variants contain sialic acid, mannose and glucosamine. Sialic acid linked to an N-acetylhexosamine-galactose arm is present in two variants. Post-translationally, glycated. Glycation is found in diabetic subjects, but only at minimal levels in nondiabetic subjects. Glycated CD59 lacks MAC-inhibitory function and confers to vascular complications of diabetes.

The protein resides in the cell membrane. Its subcellular location is the secreted. Its function is as follows. Potent inhibitor of the complement membrane attack complex (MAC) action, which protects human cells from damage during complement activation. Acts by binding to the beta-haipins of C8 (C8A and C8B) components of the assembling MAC, forming an intermolecular beta-sheet that prevents incorporation of the multiple copies of C9 required for complete formation of the osmolytic pore. Functionally, the soluble form from urine retains its specific complement binding activity, but exhibits greatly reduced ability to inhibit complement membrane attack complex (MAC) assembly on cell membranes. The sequence is that of CD59 glycoprotein from Homo sapiens (Human).